A 353-amino-acid polypeptide reads, in one-letter code: Guanine nucleotide-binding protein subunit beta-5 (353 aa).

WD repeat units follow at residues 61–100 (GHGN…KEHA), 103–142 (MPCT…NENM), 151–192 (MHTN…QSFH), 194–236 (HGAD…QAFE), 237–276 (THES…EVAI), 278–320 (SKES…RVSI), and 323–352 (GHEN…LRVW).

It belongs to the WD repeat G protein beta family. As to quaternary structure, component of a complex composed of RGS9 (isoform RGS9-1), GNB5 and RGS9BP; within this complex, the presence of GNB5 stabilizes both itself and RGS9 and increases RGS9 GTPase-activating protein (GAP) activity. Interacts with RGS7, forming the RGS7-GNB5 complex; within this complex, the presence of GNB5 increases RGS7 GTPase-activating protein (GAP) activity. Interacts with GPR158; promotes the GTPase activator activity of the RGS7-GNB5 complex in absence of glycine, in contrast GTPase activator activity of the RGS7-GNB5 complex is inhibited in presence of glycine. Interacts with RGS6. In terms of tissue distribution, detected in brain.

It localises to the membrane. Functionally, enhances GTPase-activating protein (GAP) activity of regulator of G protein signaling (RGS) proteins, such as RGS7 and RGS9, hence involved in the termination of the signaling initiated by the G protein coupled receptors (GPCRs) by accelerating the GTP hydrolysis on the G-alpha subunits, thereby promoting their inactivation. Increases RGS7 GTPase-activating protein (GAP) activity, thereby regulating mood and cognition. Increases RGS9 GTPase-activating protein (GAP) activity, hence contributes to the deactivation of G protein signaling initiated by D(2) dopamine receptors. May play an important role in neuronal signaling, including in the parasympathetic, but not sympathetic, control of heart rate. This is Guanine nucleotide-binding protein subunit beta-5 (Gnb5) from Rattus norvegicus (Rat).